A 333-amino-acid polypeptide reads, in one-letter code: Transaldolase NQM1 (333 aa).

Catalysis depends on Lys-144, which acts as the Schiff-base intermediate with substrate.

The protein belongs to the transaldolase family. Type 1 subfamily. As to quaternary structure, homodimer.

It carries out the reaction D-sedoheptulose 7-phosphate + D-glyceraldehyde 3-phosphate = D-erythrose 4-phosphate + beta-D-fructose 6-phosphate. It functions in the pathway carbohydrate degradation; pentose phosphate pathway; D-glyceraldehyde 3-phosphate and beta-D-fructose 6-phosphate from D-ribose 5-phosphate and D-xylulose 5-phosphate (non-oxidative stage): step 2/3. Its function is as follows. Transaldolase is important for the balance of metabolites in the pentose-phosphate pathway. The chain is Transaldolase NQM1 (NQM1) from Saccharomyces cerevisiae (strain ATCC 204508 / S288c) (Baker's yeast).